Here is a 90-residue protein sequence, read N- to C-terminus: Probable Fe(2+)-trafficking protein (90 aa).

Belongs to the Fe(2+)-trafficking protein family.

Could be a mediator in iron transactions between iron acquisition and iron-requiring processes, such as synthesis and/or repair of Fe-S clusters in biosynthetic enzymes. In Haemophilus influenzae (strain PittEE), this protein is Probable Fe(2+)-trafficking protein.